A 355-amino-acid polypeptide reads, in one-letter code: Phosphoribosylformylglycinamidine cyclo-ligase (355 aa).

The protein belongs to the AIR synthase family.

The protein resides in the cytoplasm. It carries out the reaction 2-formamido-N(1)-(5-O-phospho-beta-D-ribosyl)acetamidine + ATP = 5-amino-1-(5-phospho-beta-D-ribosyl)imidazole + ADP + phosphate + H(+). Its pathway is purine metabolism; IMP biosynthesis via de novo pathway; 5-amino-1-(5-phospho-D-ribosyl)imidazole from N(2)-formyl-N(1)-(5-phospho-D-ribosyl)glycinamide: step 2/2. The polypeptide is Phosphoribosylformylglycinamidine cyclo-ligase (Beijerinckia indica subsp. indica (strain ATCC 9039 / DSM 1715 / NCIMB 8712)).